Consider the following 314-residue polypeptide: ATP synthase gamma chain (314 aa).

The protein belongs to the ATPase gamma chain family. F-type ATPases have 2 components, CF(1) - the catalytic core - and CF(0) - the membrane proton channel. CF(1) has five subunits: alpha(3), beta(3), gamma(1), delta(1), epsilon(1). CF(0) has three main subunits: a, b and c.

It localises to the cellular thylakoid membrane. Functionally, produces ATP from ADP in the presence of a proton gradient across the membrane. The gamma chain is believed to be important in regulating ATPase activity and the flow of protons through the CF(0) complex. The chain is ATP synthase gamma chain from Synechococcus sp. (strain JA-2-3B'a(2-13)) (Cyanobacteria bacterium Yellowstone B-Prime).